Reading from the N-terminus, the 424-residue chain is Inhibin beta A chain (424 aa).

The signal sequence occupies residues 1 to 20 (MPLLWLRGFLLASCWIIVRS). Positions 21–308 (SPTPGSEGHG…EDHPHRRRRR (288 aa)) are excised as a propeptide. An N-linked (GlcNAc...) asparagine glycan is attached at Asn-165. The span at 264–275 (EVDGDGKKKDGS) shows a compositional bias: basic and acidic residues. The tract at residues 264–306 (EVDGDGKKKDGSDGGLEEEKEQSHRPFLMLQARQSEDHPHRRR) is disordered. 4 disulfides stabilise this stretch: Cys-312/Cys-320, Cys-319/Cys-389, Cys-348/Cys-421, and Cys-352/Cys-423.

Belongs to the TGF-beta family. Dimeric, linked by one or more disulfide bonds. Inhibin A is a dimer of alpha/INHA and beta-A/INHBA. Activin A is a homodimer of beta-A/INHBA. Activin AB is a dimer of beta-A/INHBA and beta-B/INHBB. Interacts with FST and FSTL3; these interactions prevent activin A interaction to its type II receptor. Activin A interacts with ACVR2A. Activin A interacts with BMPR2. Inhibin A interacts with ACVR1; this interaction creates a non-signaling complex (NSC) that inhibits ACVR1-mediated BMP signaling. Inhibin A interacts with ACVR2A. As to expression, uterus, ovary and liver.

The protein resides in the secreted. In terms of biological role, inhibins/activins are involved in regulating a number of diverse functions such as hypothalamic and pituitary hormone secretion, gonadal hormone secretion, germ cell development and maturation, erythroid differentiation, insulin secretion, nerve cell survival, embryonic axial development or bone growth, depending on their subunit composition. Its function is as follows. Activin A is a homodimer of INHBA that plays a role in several essential biological processes including embryonic development, stem cell maintenance and differentiation, haematopoiesis, cell proliferation and tissue fibrosis. Signals through type I (such as ACVR1B or ACVR1C) and type II receptors (such as ACVR2A, ACVR2B or BMPR2) which, upon ligand binding, phosphorylate SMAD2 and SMAD3 intracellular signaling mediators that form a complex with SMAD4, translocate to the nucleus and modulate gene expression. Can also activate alternative non-canonical intracellular signaling pathways including the p38 MAPK, extracellular signal-regulated kinases 1/2 (ERK1/2) and c-Jun N-terminal kinases (JNKs) to modulate cell migration and differentiation. Alternatively, promotes osteoblastic differentiation via ACVRL1-SMAD1/5/9 pathway. In addition, can engage the type I receptor ACVR1 to form an ACVR1-activin A-type II receptor non-signaling complex (NSC) that renders receptors unavailable for engagement with BMPs, hence resulting in an apparent inhibition of ACVR1-mediated BMP signaling. Inhibin A is a dimer of alpha/INHA and beta-A/INHBA that functions as a feedback regulator in the hypothalamic-pituitary-gonadal (HPG) axis. Inhibits the secretion of FSH from the anterior pituitary gland by acting on pituitary gonadotrope cells. Antagonizes activin A by binding to the proteoglycan, betaglycan, and forming a stable complex with and, thereby, sequestering type II activin receptors while excluding type I receptor. The chain is Inhibin beta A chain (Inhba) from Mus musculus (Mouse).